The chain runs to 203 residues: Small ribosomal subunit protein uS7A (203 aa).

This sequence belongs to the universal ribosomal protein uS7 family. As to quaternary structure, component of the small ribosomal subunit (SSU). Mature yeast ribosomes consist of a small (40S) and a large (60S) subunit. The 40S small subunit contains 1 molecule of ribosomal RNA (18S rRNA) and at least 33 different proteins. The large 60S subunit contains 3 rRNA molecules (25S, 5.8S and 5S rRNA) and at least 46 different proteins.

The protein localises to the cytoplasm. The protein resides in the nucleus. It is found in the nucleolus. In terms of biological role, component of the ribosome, a large ribonucleoprotein complex responsible for the synthesis of proteins in the cell. The small ribosomal subunit (SSU) binds messenger RNAs (mRNAs) and translates the encoded message by selecting cognate aminoacyl-transfer RNA (tRNA) molecules. The large subunit (LSU) contains the ribosomal catalytic site termed the peptidyl transferase center (PTC), which catalyzes the formation of peptide bonds, thereby polymerizing the amino acids delivered by tRNAs into a polypeptide chain. The nascent polypeptides leave the ribosome through a tunnel in the LSU and interact with protein factors that function in enzymatic processing, targeting, and the membrane insertion of nascent chains at the exit of the ribosomal tunnel. The sequence is that of Small ribosomal subunit protein uS7A (rps5) from Schizosaccharomyces pombe (strain 972 / ATCC 24843) (Fission yeast).